The sequence spans 62 residues: Large ribosomal subunit protein bL32 (62 aa).

The protein belongs to the bacterial ribosomal protein bL32 family.

The chain is Large ribosomal subunit protein bL32 from Levilactobacillus brevis (strain ATCC 367 / BCRC 12310 / CIP 105137 / JCM 1170 / LMG 11437 / NCIMB 947 / NCTC 947) (Lactobacillus brevis).